The chain runs to 1169 residues: ATP-dependent helicase/deoxyribonuclease subunit B (1169 aa).

The UvrD-like helicase ATP-binding domain maps to 1 to 285; it reads MEIQFLAGRS…TIFERNHRHL (285 aa). Residue 8–15 participates in ATP binding; that stretch reads GRSGSGKT. Positions 280–586 constitute a UvrD-like helicase C-terminal domain; the sequence is RNHRHLYTPD…KFALIPPSLD (307 aa). [4Fe-4S] cluster-binding residues include Cys-801, Cys-1121, Cys-1124, and Cys-1130.

This sequence belongs to the helicase family. AddB/RexB type 1 subfamily. Heterodimer of AddA and AddB. It depends on Mg(2+) as a cofactor. Requires [4Fe-4S] cluster as cofactor.

Its function is as follows. The heterodimer acts as both an ATP-dependent DNA helicase and an ATP-dependent, dual-direction single-stranded exonuclease. Recognizes the chi site generating a DNA molecule suitable for the initiation of homologous recombination. The AddB subunit has 5' -&gt; 3' nuclease activity but not helicase activity. This chain is ATP-dependent helicase/deoxyribonuclease subunit B, found in Bacillus pumilus (strain SAFR-032).